Consider the following 498-residue polypeptide: Lysine--tRNA ligase (498 aa).

Mg(2+) contacts are provided by E409 and E416.

It belongs to the class-II aminoacyl-tRNA synthetase family. Homodimer. The cofactor is Mg(2+).

It localises to the cytoplasm. The enzyme catalyses tRNA(Lys) + L-lysine + ATP = L-lysyl-tRNA(Lys) + AMP + diphosphate. The polypeptide is Lysine--tRNA ligase (Dichelobacter nodosus (strain VCS1703A)).